We begin with the raw amino-acid sequence, 506 residues long: Cytochrome P450 monooxygenase TES1 (506 aa).

The chain crosses the membrane as a helical span at residues 26–46; that stretch reads MSVVLAGLILLASIYFPRFMF. N167, N201, N298, and N427 each carry an N-linked (GlcNAc...) asparagine glycan. C440 contributes to the heme binding site.

This sequence belongs to the cytochrome P450 family. Heme is required as a cofactor.

The protein resides in the membrane. The protein operates within phytotoxin biosynthesis. Its function is as follows. Cytochrome P450 monooxygenase; part of the gene cluster that mediates the biosynthesis of the phytotoxin tentoxin, an inhibitor the F1-ATPase activity of chloroplasts, resulting in chlorosis in sensitive plants. Tentoxin is a cyclic tetrapeptide that consists of four amino acid residues: glycine (Gly), alanine (Ala), leucine (Leu), and dehydrophenylalanine (DPhe). In addition, both the Ala and DPhe residues are N-methylated. The nonribosomal peptide synthetase TES assembles tentoxin from the four substrate amino acids. The adenylation domains of each of the 4 modules are responsible for the activation of Gly, Ala, Leu and DPhe, respectively. In addition, the N-methyltransferase domains in the second and fourth modules of TES could be responsible for N-methylation of Ala and DPhe residues. Finally, the condensation domain located in the termination module probably catalyzes the formation of the intramolecular macrocyclization and then the release of tentoxin. The cytochrome P450 monooxygenase TES1 is predicted to be involved in the formation of DPhe. The polypeptide is Cytochrome P450 monooxygenase TES1 (Alternaria alternata (Alternaria rot fungus)).